Consider the following 138-residue polypeptide: Putative thioredoxin-like protein 453L (138 aa).

The Thioredoxin domain maps to 3–138 (QQKYFEKPVY…FNNIVNYVMG (136 aa)). Catalysis depends on nucleophile residues cysteine 44 and cysteine 47. Cysteines 44 and 47 form a disulfide.

Belongs to the thioredoxin family.

In terms of biological role, participates in various redox reactions through the reversible oxidation of its active center dithiol to a disulfide and catalyzes dithiol-disulfide exchange reactions. The protein is Putative thioredoxin-like protein 453L of Acheta domesticus (House cricket).